The chain runs to 515 residues: tRNA pseudouridine synthase Pus10 (515 aa).

Zn(2+) is bound by residues cysteine 21 and cysteine 24. Positions 42 to 85 form a coiled coil; that stretch reads KEVTYELQKYLSHGDPAEENDTPPSKKAKIEEDTSSNEHLGNCE. Residues 55–82 form a disordered region; the sequence is GDPAEENDTPPSKKAKIEEDTSSNEHLG. 2 residues coordinate Zn(2+): cysteine 96 and cysteine 99. Residues 291-304 are RNA binding forefinger loop; sequence TPWIIDGERKIESS. Aspartate 331 acts as the Nucleophile in catalysis. Residues 428-443 are RNA binding thumb loop; that stretch reads QKTPLRVLHRRPLASR.

It belongs to the pseudouridine synthase Pus10 family.

The protein localises to the nucleus. It is found in the cytoplasm. Its subcellular location is the mitochondrion. The catalysed reaction is uridine(55) in tRNA = pseudouridine(55) in tRNA. It catalyses the reaction uridine(54) in tRNA = pseudouridine(54) in tRNA. In terms of biological role, protein with different functions depending on its subcellular location: involved in miRNA processing in the nucleus and acts as a tRNA pseudouridylate synthase in the cytoplasm. In the cytoplasm, acts as a pseudouridylate synthase by catalyzing synthesis of pseudouridine(54) and pseudouridine(55) from uracil-54 and uracil-55, respectively, in the psi GC loop of a subset of tRNAs. tRNA pseudouridylate synthase activity is enhanced by the presence of 1-methyladenosine at position 53-61 of tRNAs. Does not show tRNA pseudouridylate synthase activity in the nucleus. In the nucleus, promotes primary microRNAs (pri-miRNAs) processing independently of its RNA pseudouridylate synthase activity. Binds pri-miRNAs. This chain is tRNA pseudouridine synthase Pus10, found in Xenopus laevis (African clawed frog).